The following is a 633-amino-acid chain: tRNA uridine 5-carboxymethylaminomethyl modification enzyme MnmG (633 aa).

FAD-binding positions include 15–20 (GAGHAG), I127, and S182. NAD(+) is bound at residue 276-290 (GPRYCPSIEDKIVRF). Residue Q373 participates in FAD binding.

It belongs to the MnmG family. Homodimer. Heterotetramer of two MnmE and two MnmG subunits. Requires FAD as cofactor.

It is found in the cytoplasm. NAD-binding protein involved in the addition of a carboxymethylaminomethyl (cmnm) group at the wobble position (U34) of certain tRNAs, forming tRNA-cmnm(5)s(2)U34. In Streptococcus agalactiae serotype III (strain NEM316), this protein is tRNA uridine 5-carboxymethylaminomethyl modification enzyme MnmG.